Consider the following 1280-residue polypeptide: Multidrug resistance protein 1 (1280 aa).

The Cytoplasmic portion of the chain corresponds to 1 to 72 (MSRAHAAYAN…YADATDRVLM (72 aa)). One can recognise an ABC transmembrane type-1 1 domain in the interval 72–357 (MIAGTAFAVA…VAPSRTAFTE (286 aa)). The next 6 helical transmembrane spans lie at 73–93 (IAGT…SFIF), 120–140 (YVGI…TVAA), 189–209 (KLSQ…AGFV), 216–236 (LMMI…GSIV), 297–317 (LSAA…FFFG), and 326–345 (RDMA…SFGL). Residues 346-712 (GFVAPSRTAF…MRMNKDKAWA (367 aa)) are Cytoplasmic-facing. In terms of domain architecture, ABC transporter 1 spans 391-634 (IEFRNVRFAY…DGEFAAVAKM (244 aa)). 426–433 (GASGCGKS) lines the ATP pocket. 6 consecutive transmembrane segments (helical) span residues 713-733 (VALG…SSIV), 762-781 (PLFI…HGFY), 837-857 (IGLK…GFIY), 858-878 (QWKL…CSLT), 938-958 (IIAG…YALC), and 976-996 (VMIA…AGAF). One can recognise an ABC transmembrane type-1 2 domain in the interval 713–1002 (VALGILSSVV…AGAFATKLAD (290 aa)). In terms of domain architecture, ABC transporter 2 spans 1036–1274 (IEYRNVQFIY…GGEYKTRYDL (239 aa)). 1071 to 1078 (GQTGCGKS) is a binding site for ATP. An N-linked (GlcNAc...) asparagine glycan is attached at Asn-1113.

It belongs to the ABC transporter superfamily. ABCB family. Multidrug resistance exporter (TC 3.A.1.201) subfamily.

The protein localises to the membrane. It catalyses the reaction ATP + H2O + xenobioticSide 1 = ADP + phosphate + xenobioticSide 2.. Its function is as follows. Energy-dependent efflux pump responsible for decreased drug accumulation in multi-drug-resistant cells. Confers vinblastine resistance. The chain is Multidrug resistance protein 1 (MDR1) from Leishmania enriettii.